We begin with the raw amino-acid sequence, 370 residues long: Lysophosphatidic acid receptor 4 (370 aa).

At 1–43 (MGDRRFIDFQFQDSNSSLRPRLGNATANNTCIVDDSFKYNLNG) the chain is on the extracellular side. N-linked (GlcNAc...) asparagine glycosylation is found at Asn-15, Asn-24, and Asn-28. Residues 44-64 (AVYSVVFILGLITNSVSLFVF) traverse the membrane as a helical segment. Residues 65–73 (CFRMKMRSE) are Cytoplasmic-facing. A helical transmembrane segment spans residues 74–94 (TAIFITNLAVSDLLFVCTLPF). The Extracellular portion of the chain corresponds to 95–112 (KIFYNFNRHWPFGDTLCK). Cys-111 and Cys-188 form a disulfide bridge. Residues 113 to 133 (ISGTAFLTNIYGSMLFLTCIS) form a helical membrane-spanning segment. Residues 134 to 155 (VDRFLAIVYPFRSRTIRTRRNS) are Cytoplasmic-facing. Residues 156–176 (AIVCAGVWILVLSGGISASLF) traverse the membrane as a helical segment. Over 177 to 203 (STTNVNNATTTCFEGFSKRVWKTYLSK) the chain is Extracellular. An N-linked (GlcNAc...) asparagine glycan is attached at Asn-183. A helical transmembrane segment spans residues 204-224 (ITIFIEVVGFIIPLILNVSCS). The Cytoplasmic portion of the chain corresponds to 225-254 (SVVLRTLRKPATLSQIGTNKKKVLKMITVH). Residues 255–275 (MAVFVVCFVPYNSVLFLYALV) form a helical membrane-spanning segment. The Extracellular segment spans residues 276 to 294 (RSQAITNCFLERFAKIMYP). Residues 295–315 (ITLCLATLNCCFDPFIYYFTL) traverse the membrane as a helical segment. The Cytoplasmic segment spans residues 316 to 370 (ESFQKSFYINAHIRMESLFKTETPLTTKPSLPAIQEEVSDQTTNNGGELMLESTF).

Belongs to the G-protein coupled receptor 1 family. In terms of tissue distribution, high expression in ovary. Not detected in the brain regions thalamus, putamen, caudate, frontal cortex, pons, hypothalamus and hippocampus.

The protein resides in the cell membrane. Functionally, receptor for lysophosphatidic acid (LPA), a mediator of diverse cellular activities. Transduces a signal by increasing the intracellular calcium ions and by stimulating adenylyl cyclase activity. The rank order of potency for agonists of this receptor is 1-oleoyl- &gt; 1-stearoyl- &gt; 1-palmitoyl- &gt; 1-myristoyl- &gt; 1-alkyl- &gt; 1-alkenyl-LPA. This chain is Lysophosphatidic acid receptor 4 (LPAR4), found in Homo sapiens (Human).